Reading from the N-terminus, the 462-residue chain is Juvenile hormone epoxide hydrolase (462 aa).

Residues 4–24 (ILSSFVAGVAIGSGLVITYVL) form a helical membrane-spanning segment. Aspartate 227 acts as the Nucleophile in catalysis. The active-site Proton donor is tyrosine 372. The Proton acceptor role is filled by histidine 428.

It belongs to the peptidase S33 family.

It is found in the microsome membrane. Its subcellular location is the endoplasmic reticulum membrane. It carries out the reaction cis-stilbene oxide + H2O = (1R,2R)-hydrobenzoin. It catalyses the reaction 1-(4-methoxyphenyl)-N-methyl-N-[(3-methyloxetan-3-yl)methyl]methanamine + H2O = 2-{[(4-methoxybenzyl)(methyl)amino]methyl}-2-methylpropane-1,3-diol. Catalyzes juvenile hormone hydrolysis. The chain is Juvenile hormone epoxide hydrolase from Manduca sexta (Tobacco hawkmoth).